An 82-amino-acid polypeptide reads, in one-letter code: Small ribosomal subunit protein bS16 (82 aa).

The protein belongs to the bacterial ribosomal protein bS16 family.

This Shigella boydii serotype 18 (strain CDC 3083-94 / BS512) protein is Small ribosomal subunit protein bS16.